A 515-amino-acid polypeptide reads, in one-letter code: Bifunctional purine biosynthesis protein PurH (515 aa).

The region spanning 1–145 (MTKRALISVS…KNHASVTVVV (145 aa)) is the MGS-like domain.

The protein belongs to the PurH family.

The enzyme catalyses (6R)-10-formyltetrahydrofolate + 5-amino-1-(5-phospho-beta-D-ribosyl)imidazole-4-carboxamide = 5-formamido-1-(5-phospho-D-ribosyl)imidazole-4-carboxamide + (6S)-5,6,7,8-tetrahydrofolate. It carries out the reaction IMP + H2O = 5-formamido-1-(5-phospho-D-ribosyl)imidazole-4-carboxamide. It participates in purine metabolism; IMP biosynthesis via de novo pathway; 5-formamido-1-(5-phospho-D-ribosyl)imidazole-4-carboxamide from 5-amino-1-(5-phospho-D-ribosyl)imidazole-4-carboxamide (10-formyl THF route): step 1/1. The protein operates within purine metabolism; IMP biosynthesis via de novo pathway; IMP from 5-formamido-1-(5-phospho-D-ribosyl)imidazole-4-carboxamide: step 1/1. This is Bifunctional purine biosynthesis protein PurH from Streptococcus agalactiae serotype III (strain NEM316).